Reading from the N-terminus, the 265-residue chain is Glutamate racemase (265 aa).

Residues 12–13 and 44–45 contribute to the substrate site; these read DS and YG. The active-site Proton donor/acceptor is the C75. A substrate-binding site is contributed by 76–77; sequence NT. C186 functions as the Proton donor/acceptor in the catalytic mechanism. A substrate-binding site is contributed by 187–188; it reads TH.

This sequence belongs to the aspartate/glutamate racemases family.

The enzyme catalyses L-glutamate = D-glutamate. It functions in the pathway cell wall biogenesis; peptidoglycan biosynthesis. Its function is as follows. Provides the (R)-glutamate required for cell wall biosynthesis. The chain is Glutamate racemase from Pseudomonas putida (strain ATCC 700007 / DSM 6899 / JCM 31910 / BCRC 17059 / LMG 24140 / F1).